Here is a 210-residue protein sequence, read N- to C-terminus: Large ribosomal subunit protein uL4 (210 aa).

Residues K44–R54 show a composition bias toward polar residues. The segment at K44–P94 is disordered. The segment covering G60 to G71 has biased composition (basic residues).

Belongs to the universal ribosomal protein uL4 family. Part of the 50S ribosomal subunit.

Its function is as follows. One of the primary rRNA binding proteins, this protein initially binds near the 5'-end of the 23S rRNA. It is important during the early stages of 50S assembly. It makes multiple contacts with different domains of the 23S rRNA in the assembled 50S subunit and ribosome. In terms of biological role, forms part of the polypeptide exit tunnel. The protein is Large ribosomal subunit protein uL4 of Prochlorococcus marinus subsp. pastoris (strain CCMP1986 / NIES-2087 / MED4).